The chain runs to 174 residues: Crossover junction endodeoxyribonuclease RuvC (174 aa).

Active-site residues include D8, E68, and D140. Mg(2+)-binding residues include D8, E68, and D140.

The protein belongs to the RuvC family. Homodimer which binds Holliday junction (HJ) DNA. The HJ becomes 2-fold symmetrical on binding to RuvC with unstacked arms; it has a different conformation from HJ DNA in complex with RuvA. In the full resolvosome a probable DNA-RuvA(4)-RuvB(12)-RuvC(2) complex forms which resolves the HJ. Mg(2+) is required as a cofactor.

The protein resides in the cytoplasm. The enzyme catalyses Endonucleolytic cleavage at a junction such as a reciprocal single-stranded crossover between two homologous DNA duplexes (Holliday junction).. Functionally, the RuvA-RuvB-RuvC complex processes Holliday junction (HJ) DNA during genetic recombination and DNA repair. Endonuclease that resolves HJ intermediates. Cleaves cruciform DNA by making single-stranded nicks across the HJ at symmetrical positions within the homologous arms, yielding a 5'-phosphate and a 3'-hydroxyl group; requires a central core of homology in the junction. The consensus cleavage sequence is 5'-(A/T)TT(C/G)-3'. Cleavage occurs on the 3'-side of the TT dinucleotide at the point of strand exchange. HJ branch migration catalyzed by RuvA-RuvB allows RuvC to scan DNA until it finds its consensus sequence, where it cleaves and resolves the cruciform DNA. The polypeptide is Crossover junction endodeoxyribonuclease RuvC (Legionella pneumophila (strain Lens)).